Consider the following 386-residue polypeptide: PqqA peptide cyclase (386 aa).

In terms of domain architecture, Radical SAM core spans 9-228; sequence SKPPLWLLAE…RQYIDQHHLK (220 aa). [4Fe-4S] cluster is bound by residues Cys-23, Cys-27, and Cys-30.

The protein belongs to the radical SAM superfamily. PqqE family. As to quaternary structure, interacts with PqqD. The interaction is necessary for activity of PqqE. [4Fe-4S] cluster serves as cofactor.

The enzyme catalyses [PQQ precursor protein] + S-adenosyl-L-methionine = E-Y cross-linked-[PQQ precursor protein] + 5'-deoxyadenosine + L-methionine + H(+). It functions in the pathway cofactor biosynthesis; pyrroloquinoline quinone biosynthesis. Its function is as follows. Catalyzes the cross-linking of a glutamate residue and a tyrosine residue in the PqqA protein as part of the biosynthesis of pyrroloquinoline quinone (PQQ). This is PqqA peptide cyclase from Acinetobacter baylyi (strain ATCC 33305 / BD413 / ADP1).